A 255-amino-acid chain; its full sequence is Hemin import ATP-binding protein HmuV (255 aa).

An ABC transporter domain is found at 2-238; it reads LRVENLHVRR…EPLKAVFGLE (237 aa). 34–41 contacts ATP; the sequence is GPNGAGKS.

The protein belongs to the ABC transporter superfamily. Heme (hemin) importer (TC 3.A.1.14.5) family. As to quaternary structure, the complex is composed of two ATP-binding proteins (HmuV), two transmembrane proteins (HmuU) and a solute-binding protein (HmuT).

It localises to the cell inner membrane. Its function is as follows. Part of the ABC transporter complex HmuTUV involved in hemin import. Responsible for energy coupling to the transport system. The protein is Hemin import ATP-binding protein HmuV of Pseudomonas fluorescens (strain ATCC BAA-477 / NRRL B-23932 / Pf-5).